The chain runs to 378 residues: Putative glycosyltransferase ORF378 (378 aa).

This sequence belongs to the glycosyltransferase group 1 family. Glycosyltransferase 4 subfamily.

The protein is Putative glycosyltransferase ORF378 of Acidianus sp. F28 (AFV-2).